Here is a 165-residue protein sequence, read N- to C-terminus: Nascent polypeptide-associated complex subunit beta (165 aa).

2 disordered regions span residues 1–34 (MDQAKLARMQASVRIGGKGTPRRKVKKVHKTSGA) and 133–165 (QNMQKNQAGEKKDDDEDDIPDLVEGENFEKSVD). Positions 20–30 (TPRRKVKKVHK) are enriched in basic residues. The NAC-A/B domain maps to 33–110 (GADDKKLQAT…GEEKELTELV (78 aa)). The span at 145–158 (DDDEDDIPDLVEGE) shows a compositional bias: acidic residues.

Belongs to the NAC-beta family. As to quaternary structure, part of the nascent polypeptide-associated complex (NAC), consisting of egd2 and egd1. NAC associates with ribosomes via egd1.

The protein localises to the cytoplasm. The protein resides in the nucleus. In terms of biological role, component of the nascent polypeptide-associated complex (NAC), a dynamic component of the ribosomal exit tunnel, protecting the emerging polypeptides from interaction with other cytoplasmic proteins to ensure appropriate nascent protein targeting. The NAC complex also promotes mitochondrial protein import by enhancing productive ribosome interactions with the outer mitochondrial membrane and blocks the inappropriate interaction of ribosomes translating non-secretory nascent polypeptides with translocation sites in the membrane of the endoplasmic reticulum. EGD1 may act as a transcription factor that exert a negative effect on the expression of several genes that are transcribed by RNA polymerase II. This chain is Nascent polypeptide-associated complex subunit beta (egd1), found in Emericella nidulans (strain FGSC A4 / ATCC 38163 / CBS 112.46 / NRRL 194 / M139) (Aspergillus nidulans).